The chain runs to 90 residues: Mu-theraphotoxin-Phlo1b (90 aa).

The N-terminal stretch at 1–22 is a signal peptide; it reads MKVSVLITLAVLGVMFVWTSAA. Positions 23 to 50 are excised as a propeptide; the sequence is EQEDHGSDRRDSPALLKSLGRVFQSEER. 3 disulfides stabilise this stretch: Cys52/Cys66, Cys59/Cys71, and Cys65/Cys79. Phe85 is modified (phenylalanine amide). The propeptide occupies 86 to 90; sequence GNEKS.

It belongs to the neurotoxin 10 (Hwtx-1) family. 39 (Jztx-34) subfamily. Expressed by the venom gland.

The protein resides in the secreted. In terms of biological role, gating-modifier toxin that inhibits voltage-gated sodium channel Nav by shifting the threshold for channel activation to more positive potentials. This toxin moderately inhibits human Nav1.7/SCN9A (IC(50)=360 nM) and weakly inhibits hNav1.2/SCN2A (37% inhibition at 1 uM peptide) and hNav1.5/SCN5A (&lt;20% inhibition at 1 uM peptide). Inhibition of Nav1.7 is voltage-dependent, with lower inhibition at more positive test pulses. The polypeptide is Mu-theraphotoxin-Phlo1b (Phlogius sp. (Tarantula spider)).